A 137-amino-acid polypeptide reads, in one-letter code: Peptide methionine sulfoxide reductase MsrB (137 aa).

The 123-residue stretch at 7–129 (VDDLKENLSE…NSASLSFTDE (123 aa)) folds into the MsrB domain. Cys-46, Cys-49, Cys-95, and Cys-98 together coordinate Zn(2+). Residue Cys-118 is the Nucleophile of the active site.

It belongs to the MsrB Met sulfoxide reductase family. Requires Zn(2+) as cofactor.

The catalysed reaction is L-methionyl-[protein] + [thioredoxin]-disulfide + H2O = L-methionyl-(R)-S-oxide-[protein] + [thioredoxin]-dithiol. This chain is Peptide methionine sulfoxide reductase MsrB, found in Escherichia fergusonii (strain ATCC 35469 / DSM 13698 / CCUG 18766 / IAM 14443 / JCM 21226 / LMG 7866 / NBRC 102419 / NCTC 12128 / CDC 0568-73).